We begin with the raw amino-acid sequence, 371 residues long: tRNA-specific 2-thiouridylase MnmA (371 aa).

ATP is bound by residues 14 to 21 and Met40; that span reads GMSGGVDS. An interaction with target base in tRNA region spans residues 100–102; it reads NPD. Catalysis depends on Cys105, which acts as the Nucleophile. A disulfide bond links Cys105 and Cys201. Residue Gly129 participates in ATP binding. The segment at 151 to 153 is interaction with tRNA; sequence KDQ. Cys201 serves as the catalytic Cysteine persulfide intermediate. The interval 309–310 is interaction with tRNA; it reads RY.

It belongs to the MnmA/TRMU family.

It is found in the cytoplasm. The catalysed reaction is S-sulfanyl-L-cysteinyl-[protein] + uridine(34) in tRNA + AH2 + ATP = 2-thiouridine(34) in tRNA + L-cysteinyl-[protein] + A + AMP + diphosphate + H(+). Catalyzes the 2-thiolation of uridine at the wobble position (U34) of tRNA, leading to the formation of s(2)U34. This chain is tRNA-specific 2-thiouridylase MnmA, found in Halalkalibacterium halodurans (strain ATCC BAA-125 / DSM 18197 / FERM 7344 / JCM 9153 / C-125) (Bacillus halodurans).